We begin with the raw amino-acid sequence, 1355 residues long: Transcription factor MAR1 (1355 aa).

The segment at residues 23–52 (CTICRKRKVKCDKTRPHCNQCTKTGVAHLC) is a DNA-binding region (zn(2)-C6 fungal-type). Disordered regions lie at residues 586–614 (TTDN…KDTN), 918–942 (SVPS…LNQD), and 1221–1253 (PPIS…TSSL). Residues 589–603 (NTRSGPPSNSNRNGS) show a composition bias toward low complexity. Polar residues predominate over residues 604–614 (ETPSVSPKDTN). Positions 918 to 927 (SVPSSCNSSS) are enriched in low complexity. Residues 1225 to 1238 (SAKNNMAWGTTPES) show a composition bias toward polar residues.

It localises to the nucleus. Functionally, transcription factor that contributes to plasma membrane sphingolipid incorporation and membrane permeability, decreasing fluconazole accumulation. Regulates 337 genes under fluconazole stress, including several related to lipid biosynthesis pathways such as RSB1, encoding a sphingoid long-chain base efflux transporter. Associates with the promoter of RSB1 in the region containing two 5'-CCCCTCC-3' motifs and increases its promoter occupancy upon fluconazole stress. In Candida glabrata (strain ATCC 2001 / BCRC 20586 / JCM 3761 / NBRC 0622 / NRRL Y-65 / CBS 138) (Yeast), this protein is Transcription factor MAR1.